A 620-amino-acid polypeptide reads, in one-letter code: Mitochondrial Rho GTPase 2 (620 aa).

Over 1–594 the chain is Cytoplasmic; it reads MRRDVRILLL…ELHPTSFWLR (594 aa). Residues 2–168 form the Miro 1 domain; it reads RRDVRILLLG…FYYAQKAVLH (167 aa). The GTP site is built by Gly16, Lys17, Thr18, and Ser19. Residue Thr18 coordinates Mg(2+). Mg(2+) is bound at residue Asp57. Ser59 contacts GTP. Lys96 participates in a covalent cross-link: Glycyl lysine isopeptide (Lys-Gly) (interchain with G-Cter in ubiquitin). GTP is bound by residues Asn118, Lys119, Asp121, Ala149, and Lys150. Lys119 participates in a covalent cross-link: Glycyl lysine isopeptide (Lys-Gly) (interchain with G-Cter in ubiquitin). Lys164 is covalently cross-linked (Glycyl lysine isopeptide (Lys-Gly) (interchain with G-Cter in ubiquitin)). EF-hand domains follow at residues 184–219 and 304–339; these read ACAQ…CFGH and RGYQ…FSGA. Ca(2+)-binding residues include Asp197, Asp199, Asp201, Glu208, Asp317, Asp319, Asp321, and Glu328. A Miro 2 domain is found at 415–578; sequence RSVLMCKVLG…FTQLATMATF (164 aa). Positions 427, 429, 430, 431, and 432 each coordinate GTP. Position 431 (Ser431) interacts with Mg(2+). Residue Glu473 coordinates Mg(2+). 3 residues coordinate GTP: Lys527, Asp529, and Cys558. A helical; Anchor for type IV membrane protein membrane pass occupies residues 595 to 617; that stretch reads GVLVAVGTAVAAVLSFSLYRVLV. The Mitochondrial intermembrane portion of the chain corresponds to 618–620; it reads KSR.

The protein belongs to the mitochondrial Rho GTPase family. Homodimer. Interacts with the kinesin-binding proteins TRAK1/OIP106 and TRAK2/GRIF1, forming a link between mitochondria and the trafficking apparatus of the microtubules. Interacts with ARMCX3. Found in a complex with KIF5B, OGT, RHOT1 and TRAK1. Post-translationally, ubiquitinated by PRKN in a PINK1-dependent manner, leading to its degradation. As to expression, ubiquitously expressed.

It is found in the mitochondrion outer membrane. The catalysed reaction is GTP + H2O = GDP + phosphate + H(+). It catalyses the reaction ATP + H2O = ADP + phosphate + H(+). It carries out the reaction UTP + H2O = UDP + phosphate + H(+). Functionally, atypical mitochondrial nucleoside-triphosphatase (NTPase) involved in mitochondrial trafficking. Probably involved in control of anterograde transport of mitochondria and their subcellular distribution. Can hydrolyze GTP, ATP and UTP. This is Mitochondrial Rho GTPase 2 (Rhot2) from Mus musculus (Mouse).